The primary structure comprises 628 residues: DNA mismatch repair protein MutL (628 aa).

Residues Pro332–Glu416 form a disordered region. Polar residues predominate over residues Glu375 to Ser396.

It belongs to the DNA mismatch repair MutL/HexB family.

Functionally, this protein is involved in the repair of mismatches in DNA. It is required for dam-dependent methyl-directed DNA mismatch repair. May act as a 'molecular matchmaker', a protein that promotes the formation of a stable complex between two or more DNA-binding proteins in an ATP-dependent manner without itself being part of a final effector complex. The polypeptide is DNA mismatch repair protein MutL (Syntrophotalea carbinolica (strain DSM 2380 / NBRC 103641 / GraBd1) (Pelobacter carbinolicus)).